The sequence spans 265 residues: Phosphate import ATP-binding protein PstB 1 (265 aa).

The ABC transporter domain occupies 20–260 (LSTNDLSVLY…PKGKITEDYI (241 aa)). 53-60 (GASGSGKS) lines the ATP pocket.

This sequence belongs to the ABC transporter superfamily. Phosphate importer (TC 3.A.1.7) family. The complex is composed of two ATP-binding proteins (PstB), two transmembrane proteins (PstC and PstA) and a solute-binding protein (PstS).

The protein resides in the cell membrane. It catalyses the reaction phosphate(out) + ATP + H2O = ADP + 2 phosphate(in) + H(+). In terms of biological role, part of the ABC transporter complex PstSACB involved in phosphate import. Responsible for energy coupling to the transport system. The chain is Phosphate import ATP-binding protein PstB 1 from Lactobacillus acidophilus (strain ATCC 700396 / NCK56 / N2 / NCFM).